The following is a 63-amino-acid chain: Cecropin-B (63 aa).

The first 22 residues, 1 to 22 (MNFAKILSFVFALVLALSMTSA), serve as a signal peptide directing secretion. Positions 23 to 26 (APEP) are cleaved as a propeptide — removed by a dipeptidylpeptidase. Position 47 is a 5-hydroxylysine; partial (lysine 47). Residue isoleucine 61 is modified to Isoleucine amide.

This sequence belongs to the cecropin family. In terms of processing, lepidopteran-B differs from lepidopteran-A by its hydroxylated residue. Highest expression in fat body and hemocytes. Is also expressed in Malpighian tubules and to a much lesser extent in midgut. Not present in silk gland.

It is found in the secreted. In terms of biological role, cecropins have lytic and antibacterial activity against several Gram-positive and Gram-negative bacteria. In Bombyx mori (Silk moth), this protein is Cecropin-B (CECB1).